Here is a 1563-residue protein sequence, read N- to C-terminus: NACHT domain- and WD repeat-containing protein 1 (1563 aa).

The WD 1 repeat unit spans residues 274 to 314 (TNHQVLEQLRELELARQELGWLYQEIRHHLWQSTESTKVFC). Residues 336–666 (TPLVLFGPPG…HRQLSQVIQV (331 aa)) enclose the NACHT domain. 342–349 (GPPGIGKT) serves as a coordination point for ATP. 12 WD repeats span residues 866-905 (GCHK…VVHV), 908-947 (GHTA…EKVT), 954-994 (QNPT…LVFC), 998-1037 (DVSD…LQEK), 1044-1082 (KEET…LLEK), 1126-1165 (EHED…TLLN), 1168-1207 (EGVG…KLQS), 1212-1251 (LDRT…EQDC), 1253-1292 (DTSN…DVLC), 1346-1385 (QLPE…FPLE), 1386-1425 (AHGS…GMFE), and 1431-1470 (SCCR…LLAV). A disordered region spans residues 1534–1563 (AAEASQDAEPVAVEGKESKSNKRSQVCLIL).

May interact with HSP90AA1, HSP90AB1 and BAG2.

It is found in the cytoplasm. Its subcellular location is the cytosol. Functionally, may play a role in the control of androgen receptor (AR) protein steady-state levels. The polypeptide is NACHT domain- and WD repeat-containing protein 1 (Nwd1) (Mus musculus (Mouse)).